The following is a 283-amino-acid chain: 5'-nucleotidase SurE (283 aa).

A divalent metal cation is bound by residues aspartate 14, aspartate 15, serine 47, and asparagine 105.

It belongs to the SurE nucleotidase family. A divalent metal cation serves as cofactor.

The protein localises to the cytoplasm. The catalysed reaction is a ribonucleoside 5'-phosphate + H2O = a ribonucleoside + phosphate. Functionally, nucleotidase that shows phosphatase activity on nucleoside 5'-monophosphates. The protein is 5'-nucleotidase SurE of Chlamydia trachomatis serovar A (strain ATCC VR-571B / DSM 19440 / HAR-13).